The chain runs to 435 residues: F-box only protein 9 (435 aa).

The interval 1 to 25 (MAEAEEDCHSDAVRVGDEGHESPAE) is disordered. The segment covering 7-25 (DCHSDAVRVGDEGHESPAE) has biased composition (basic and acidic residues). The stretch at 82-115 (ARELFLKAVEEEQNGALYEAIKFYRRAMQLVPDI) is one TPR repeat. Position 124 is a phosphoserine (serine 124). One can recognise an F-box domain in the interval 173-224 (QTHISVLPMEVLMYIFRWVVSSDLDLRSLEQLSLVCRGFYICARDPEIWRLA).

As to quaternary structure, part of the SCF (SKP1-CUL1-F-box) E3 ubiquitin-protein ligase complex SCF(FBXO9) composed of CUL1, SKP1, RBX1 and FBXO9. Interacts with TTI1 and TELO2; when TTI1 and TELO2 are phosphorylated by CK2.

It is found in the cytoplasm. The protein operates within protein modification; protein ubiquitination. Its function is as follows. Substrate recognition component of a SCF (SKP1-CUL1-F-box protein) E3 ubiquitin-protein ligase complex which mediates the ubiquitination and subsequent proteasomal degradation of target proteins and plays a role in several biological processes such as cell cycle, cell proliferation, or maintenance of chromosome stability. Ubiquitinates mTORC1-bound TTI1 and TELO2 when they are phosphorylated by CK2 following growth factor deprivation, leading to their degradation. In contrast, does not mediate ubiquitination of TTI1 and TELO2 when they are part of the mTORC2 complex. As a consequence, mTORC1 is inactivated to restrain cell growth and protein translation, while mTORC2 is the activated due to the relief of feedback inhibition by mTORC1. Plays a role in maintaining epithelial cell survival by regulating the turn-over of chromatin modulator PRMT4 through ubiquitination and degradation by the proteasomal pathway. Also regulates PPARgamma stability by facilitating PPARgamma/PPARG ubiquitination and thereby plays a role in adipocyte differentiation. The sequence is that of F-box only protein 9 (Fbxo9) from Rattus norvegicus (Rat).